A 224-amino-acid polypeptide reads, in one-letter code: Vesicle transport through interaction with t-SNAREs homolog 1A (224 aa).

The Cytoplasmic segment spans residues 1-199; sequence MSADFEGYEQ…GMLRRIIQNR (199 aa). 2 coiled-coil regions span residues 31–92 and 106–185; these read PDEK…KRSR and DAGN…GKSS. Residues 200–220 traverse the membrane as a helical; Anchor for type IV membrane protein segment; it reads ILLVILGIIVVITILTAITFF. The Vesicular portion of the chain corresponds to 221–224; sequence VRGH.

It belongs to the VTI1 family. In terms of assembly, interacts with distinct SNARE complexes that contain either STX5 or STX6. Interacts with NAPA and, to a lesser extent, with NAPG. Identified in a complex containing STX6, STX12, VAMP4 and VTI1A. Specifically expressed in the neuronal tissues cerebellum, cortex and hippocampus. Isoform 1/VTI1A is expressed in the same neuronal tissues but also in lung, liver, kidney and spleen.

The protein localises to the membrane. It localises to the cytoplasmic vesicle. It is found in the secretory vesicle. The protein resides in the synaptic vesicle membrane. Its subcellular location is the clathrin-coated vesicle membrane. The protein localises to the golgi apparatus membrane. Functionally, V-SNARE that mediates vesicle transport pathways through interactions with t-SNAREs on the target membrane. These interactions are proposed to mediate aspects of the specificity of vesicle trafficking and to promote fusion of the lipid bilayers. Involved in vesicular transport from the late endosomes to the trans-Golgi network. Along with VAMP7, involved in an non-conventional RAB1-dependent traffic route to the cell surface used by KCNIP1 and KCND2. May be concerned with increased secretion of cytokines associated with cellular senescence. The chain is Vesicle transport through interaction with t-SNAREs homolog 1A (Vti1a) from Rattus norvegicus (Rat).